The primary structure comprises 247 residues: Probable transcriptional regulatory protein GTNG_2524 (247 aa).

Residues 1–14 (MAGHSKWKNIQRRK) are compositionally biased toward basic residues. The disordered stretch occupies residues 1-21 (MAGHSKWKNIQRRKNAQDAKR).

This sequence belongs to the TACO1 family.

It is found in the cytoplasm. The protein is Probable transcriptional regulatory protein GTNG_2524 of Geobacillus thermodenitrificans (strain NG80-2).